Reading from the N-terminus, the 1428-residue chain is uncharacterized protein (1428 aa).

Disordered regions lie at residues 1-53 (MAKK…AFKV), 249-274 (DIKHTPNKETQPSNQVDDSLKSKDSK), and 377-413 (KNGIQEDSQSTDDSSKDDDNNSESNDMSPHNDAETRA). The span at 16-33 (ATTSIPSRSASSPANKNQ) shows a compositional bias: polar residues. Residues 34-51 (VKGEKNNKTQKVEPKNAF) are compositionally biased toward basic and acidic residues. Residues 256–265 (KETQPSNQVD) are compositionally biased toward polar residues. The Helicase ATP-binding domain occupies 641 to 811 (IDAVNNSQLL…FEGSNLITIP (171 aa)). Residue 654–661 (GDTGCGKS) coordinates ATP. The DEAH box signature appears at 758–761 (DEVH). In terms of domain architecture, Helicase C-terminal spans 886–1064 (LIVYLLKYIF…EVVLRVKMCQ (179 aa)).

This sequence belongs to the helicase family. SKI2 subfamily.

It is found in the cytoplasm. This is an uncharacterized protein from Schizosaccharomyces pombe (strain 972 / ATCC 24843) (Fission yeast).